We begin with the raw amino-acid sequence, 111 residues long: Protein BEX5 (111 aa).

Basic and acidic residues predominate over residues 1 to 12 (MENVPKENKVVE). Residues 1-37 (MENVPKENKVVEKAPVQNEAPALGGGEYQEPGGNVKG) are disordered. Positions 100–104 (HHDHH) are his cluster. A Zn(2+)-binding site is contributed by C108.

The protein belongs to the BEX family. In terms of processing, ubiquitinated. Degraded by the proteasome.

The protein localises to the cytoplasm. This is Protein BEX5 (BEX5) from Homo sapiens (Human).